The chain runs to 593 residues: ESX-1 secretion system protein EccCb1 (593 aa).

FtsK domains lie at 66–260 (RQEV…NETQ) and 350–546 (QVPL…EKND). ATP contacts are provided by residues 85 to 92 (GAPQTGKS) and 377 to 384 (GAPKSGKT).

In terms of assembly, part of the ESX-1 / type VII secretion system (T7SS), which is composed of cytosolic and membrane components. The ESX-1 membrane complex is composed of EccB1, EccCa1, EccCb1, EccD1 and EccE1.

It is found in the cytoplasm. In terms of biological role, part of the ESX-1 / type VII specialized secretion system (T7SS), which exports several proteins including EsxA and EsxB. Plays a role in DNA conjugation, in both donor and recipient strains. This chain is ESX-1 secretion system protein EccCb1, found in Mycolicibacterium smegmatis (strain ATCC 700084 / mc(2)155) (Mycobacterium smegmatis).